Consider the following 429-residue polypeptide: Enolase (429 aa).

Glutamine 162 is a binding site for (2R)-2-phosphoglycerate. The Proton donor role is filled by glutamate 204. Mg(2+) contacts are provided by aspartate 242, glutamate 289, and aspartate 316. Positions 341, 370, 371, and 392 each coordinate (2R)-2-phosphoglycerate. Residue lysine 341 is the Proton acceptor of the active site.

It belongs to the enolase family. Mg(2+) serves as cofactor.

It localises to the cytoplasm. It is found in the secreted. The protein localises to the cell surface. The enzyme catalyses (2R)-2-phosphoglycerate = phosphoenolpyruvate + H2O. The protein operates within carbohydrate degradation; glycolysis; pyruvate from D-glyceraldehyde 3-phosphate: step 4/5. In terms of biological role, catalyzes the reversible conversion of 2-phosphoglycerate (2-PG) into phosphoenolpyruvate (PEP). It is essential for the degradation of carbohydrates via glycolysis. The polypeptide is Enolase (Flavobacterium psychrophilum (strain ATCC 49511 / DSM 21280 / CIP 103535 / JIP02/86)).